Consider the following 642-residue polypeptide: MPCGEDWLSHPLGIVQGFFAQNGVTPDWEKKVIDYFKEKLKENNAPKWVPSLNEVPLHYLKPNSFVKFRCMIQDMFDPEFYMGVYETVNQNTKARVLHFGKYRDVAECGPQQELDLNSPRSTTSERQTFYCVPVPGESLWVKEAYVNANQARVSPSTSYTPSRHKRSYEDDEDMDLQPNKQKDQHSGARQAGGLGGLHWRGEPKRLETEASSGQQLNSLNLSSPFDLNFPLPGEKGPACLVKVYEDWDCFKVNDVLELYGVLSVDPILSILNNEERDASALLDPMECTDMAEEQRVHSPPASLVPRIHVILAQKLQHINPLLPTCLNKEESRTCQFVSNFMSELSPVRAELLGFLTHALLGDSLAAEYLILHLISTVYTRRDVLPLGKFTVNLSGCPQNSTFTEHLYRIIQHLVPASFRLQMTIENMNQLKLIPHKDYTANRLVSGLLQLPNNTSLVIDETLLEQGQLDTPGVHNVAALSNLITWQKVDYDFSYHQMEFPCNINVLITSEGRSLLPADCQIHLQPQLIPPNMEEYMNGLLSAVLPSVLNKFRIYLTLLRFLDYNLSDDITKAVEDDFVEMRKNDPQSITADDLHQLLVVARFLSLSAGQTTLSRERWLRAKQLEHSRRSRLQQQKSVNGNEL.

The span at 151-161 (ARVSPSTSYTP) shows a compositional bias: polar residues. Residues 151–200 (ARVSPSTSYTPSRHKRSYEDDEDMDLQPNKQKDQHSGARQAGGLGGLHWR) form a disordered region. Serine 154 bears the Phosphoserine mark. At threonine 160 the chain carries Phosphothreonine. Phosphoserine is present on residues serine 167 and serine 298.

The protein belongs to the MCMBP family. In terms of assembly, interacts with the MCM complex: associates with the MCM3-7 complex which lacks MCM2, while it does not interact with the MCM complex when MCM2 is present (MCM2-7 complex). Interacts with the RPA complex, when composed of all RPA1, RPA2 and RPA3 components, but not with RPA1 or RPA2 alone.

The protein localises to the nucleus. Functionally, associated component of the MCM complex that acts as a regulator of DNA replication. Binds to the MCM complex during late S phase and promotes the disassembly of the MCM complex from chromatin, thereby acting as a key regulator of pre-replication complex (pre-RC) unloading from replicated DNA. Can dissociate the MCM complex without addition of ATP; probably acts by destabilizing interactions of each individual subunits of the MCM complex. Required for sister chromatid cohesion. This chain is Mini-chromosome maintenance complex-binding protein (Mcmbp), found in Rattus norvegicus (Rat).